The following is a 222-amino-acid chain: Glycerol-3-phosphate acyltransferase (222 aa).

Transmembrane regions (helical) follow at residues 4–24 (ALLLCLCLLLITYLMGSIPTG), 56–76 (PAAIAVLAIDISKGVMAVALV), 87–107 (ALPAAWQNWLTLGVAIAVVLG), 130–150 (FMLNIWLALGTLATFLTVIFF), 153–173 (IVSLSSIVAAIAVNGIALALQ), and 174–191 (LPPPYLAFTFLAGMYVIV).

Belongs to the PlsY family. Probably interacts with PlsX.

It localises to the cell inner membrane. The enzyme catalyses an acyl phosphate + sn-glycerol 3-phosphate = a 1-acyl-sn-glycero-3-phosphate + phosphate. Its pathway is lipid metabolism; phospholipid metabolism. Catalyzes the transfer of an acyl group from acyl-phosphate (acyl-PO(4)) to glycerol-3-phosphate (G3P) to form lysophosphatidic acid (LPA). This enzyme utilizes acyl-phosphate as fatty acyl donor, but not acyl-CoA or acyl-ACP. The chain is Glycerol-3-phosphate acyltransferase from Synechocystis sp. (strain ATCC 27184 / PCC 6803 / Kazusa).